We begin with the raw amino-acid sequence, 87 residues long: Conotoxin Cl12.3 (87 aa).

The first 19 residues, methionine 1–leucine 19, serve as a signal peptide directing secretion. Residues isoleucine 20–arginine 42 constitute a propeptide that is removed on maturation.

Belongs to the conotoxin O1 superfamily. In terms of processing, contains 4 disulfide bonds. In terms of tissue distribution, expressed by the venom duct.

It is found in the secreted. This is Conotoxin Cl12.3 from Californiconus californicus (California cone).